Here is a 286-residue protein sequence, read N- to C-terminus: 2-hydroxy-6-oxononadienedioate/2-hydroxy-6-oxononatrienedioate hydrolase (286 aa).

One can recognise an AB hydrolase-1 domain in the interval 36 to 271 (VIMLHGGGPG…RCGHWAQWEH (236 aa)). Residue H265 is the Proton acceptor of the active site.

Belongs to the AB hydrolase superfamily. BphD family. As to quaternary structure, homodimer.

It carries out the reaction (2Z,4E)-2-hydroxy-6-oxonona-2,4-dienedioate + H2O = (2Z)-2-hydroxypenta-2,4-dienoate + succinate + H(+). The enzyme catalyses (2Z,4E,7E)-2-hydroxy-6-oxonona-2,4,7-trienedioate + H2O = (2Z)-2-hydroxypenta-2,4-dienoate + fumarate + H(+). It functions in the pathway aromatic compound metabolism; 3-phenylpropanoate degradation. Functionally, catalyzes the cleavage of the C5-C6 bond of 2-hydroxy-6-oxononadienedioate, and probably also 2-hydroxy-6-oxononatrienedioate, a dienol ring fission product of the bacterial meta-cleavage pathway for degradation of phenylpropionic acid. This chain is 2-hydroxy-6-oxononadienedioate/2-hydroxy-6-oxononatrienedioate hydrolase (mhpC), found in Comamonas testosteroni (Pseudomonas testosteroni).